A 209-amino-acid chain; its full sequence is Protein-L-isoaspartate O-methyltransferase (209 aa).

Residue S55 is part of the active site.

It belongs to the methyltransferase superfamily. L-isoaspartyl/D-aspartyl protein methyltransferase family.

Its subcellular location is the cytoplasm. The enzyme catalyses [protein]-L-isoaspartate + S-adenosyl-L-methionine = [protein]-L-isoaspartate alpha-methyl ester + S-adenosyl-L-homocysteine. Functionally, catalyzes the methyl esterification of L-isoaspartyl residues in peptides and proteins that result from spontaneous decomposition of normal L-aspartyl and L-asparaginyl residues. It plays a role in the repair and/or degradation of damaged proteins. In Anaeromyxobacter dehalogenans (strain 2CP-C), this protein is Protein-L-isoaspartate O-methyltransferase.